Reading from the N-terminus, the 84-residue chain is Large ribosomal subunit protein bL27 (84 aa).

Positions 1–11 are enriched in polar residues; sequence MATTKAGGSTK. A disordered region spans residues 1-20; the sequence is MATTKAGGSTKNGRDSHSKR.

The protein belongs to the bacterial ribosomal protein bL27 family.

The sequence is that of Large ribosomal subunit protein bL27 from Mycoplasmopsis synoviae (strain 53) (Mycoplasma synoviae).